The following is a 256-amino-acid chain: Thiazole synthase (256 aa).

The active-site Schiff-base intermediate with DXP is lysine 95. Residues glycine 156, 182-183 (AG), and 204-205 (NT) each bind 1-deoxy-D-xylulose 5-phosphate.

This sequence belongs to the ThiG family. As to quaternary structure, homotetramer. Forms heterodimers with either ThiH or ThiS.

The protein resides in the cytoplasm. It catalyses the reaction [ThiS sulfur-carrier protein]-C-terminal-Gly-aminoethanethioate + 2-iminoacetate + 1-deoxy-D-xylulose 5-phosphate = [ThiS sulfur-carrier protein]-C-terminal Gly-Gly + 2-[(2R,5Z)-2-carboxy-4-methylthiazol-5(2H)-ylidene]ethyl phosphate + 2 H2O + H(+). The protein operates within cofactor biosynthesis; thiamine diphosphate biosynthesis. Its function is as follows. Catalyzes the rearrangement of 1-deoxy-D-xylulose 5-phosphate (DXP) to produce the thiazole phosphate moiety of thiamine. Sulfur is provided by the thiocarboxylate moiety of the carrier protein ThiS. In vitro, sulfur can be provided by H(2)S. This chain is Thiazole synthase, found in Enterobacter sp. (strain 638).